Reading from the N-terminus, the 494-residue chain is Alpha-amylase-related protein (494 aa).

Residues 1–20 form the signal peptide; it reads MIKFALALTLCLAGASLSLA. Pyrrolidone carboxylic acid is present on Gln-21. Cysteines 48 and 104 form a disulfide. The Ca(2+) site is built by Asn-118, Gln-169, and Asp-178. Cys-157 and Cys-171 form a disulfide bridge. Chloride is bound at residue Arg-206. The Nucleophile role is filled by Asp-208. His-212 provides a ligand contact to Ca(2+). Glu-245 serves as the catalytic Proton donor. Positions 308 and 343 each coordinate chloride. 3 disulfide bridges follow: Cys-376–Cys-382, Cys-418–Cys-441, and Cys-448–Cys-460.

This sequence belongs to the glycosyl hydrolase 13 family. As to quaternary structure, monomer. Ca(2+) serves as cofactor. Chloride is required as a cofactor.

The protein resides in the secreted. The catalysed reaction is Endohydrolysis of (1-&gt;4)-alpha-D-glucosidic linkages in polysaccharides containing three or more (1-&gt;4)-alpha-linked D-glucose units.. The sequence is that of Alpha-amylase-related protein (Amyrel) from Drosophila auraria (Fruit fly).